Consider the following 70-residue polypeptide: U2-agatoxin-Ao1m (70 aa).

Positions 1–20 (MRAIISLFLISAMVFSMIQA) are cleaved as a signal peptide. Residues 21 to 34 (VPEEXGLQLSEDER) constitute a propeptide that is removed on maturation. 3 cysteine pairs are disulfide-bonded: cysteine 37-cysteine 53, cysteine 44-cysteine 58, and cysteine 52-cysteine 68. Leucine amide is present on leucine 69.

It belongs to the neurotoxin 01 (U2-agtx) family. As to expression, expressed by the venom gland.

The protein localises to the secreted. Insect active toxin causing rapid but reversible paralysis in crickets. No activity shown in mammals. Does not show effect on mammalian voltage-gated calcium channels. The sequence is that of U2-agatoxin-Ao1m from Agelena orientalis (Funnel-web spider).